We begin with the raw amino-acid sequence, 367 residues long: Isocitrate dehydrogenase [NAD] regulatory subunit 2, mitochondrial (367 aa).

The N-terminal 25 residues, Met1–Ser25, are a transit peptide targeting the mitochondrion.

This sequence belongs to the isocitrate and isopropylmalate dehydrogenases family. In terms of assembly, heterooligomer of catalytic and regulatory subunits. As to expression, ubiquitous. Predominantly expressed in roots, stems and leaves.

Its subcellular location is the mitochondrion. Its function is as follows. Performs an essential role in the oxidative function of the citric acid cycle. The sequence is that of Isocitrate dehydrogenase [NAD] regulatory subunit 2, mitochondrial (IDH2) from Arabidopsis thaliana (Mouse-ear cress).